We begin with the raw amino-acid sequence, 407 residues long: MAKKTVEALGAADLKGKRALVRVDFNVPLDESGQITDDTRIRAALPTIGMLTGGGARVILVSHLGRPKGFDDQLRLTPVAKRLGELLGQTVYKADDVIGPEVEEAVKKLEDGDVLLLENVRFYPEEEKNNPEFAQKLAGLAELYVNDAFGTAHRAHASTEGVARYLRPAVAGLLLQKELEYLGKALESPERPVLAIMGGAKVSDKIQLIQNMLTKVDSILIGGAMAYTFLKAQGVDVGASRCETSTTKKDGTTVDLLQLALDLLAEAKERGVTFLLPVDHRTNDKFGDLADPPVTPDANIPEGQMALDIGPKTEELYVAEVQKSGTVIWNGPMGVFELPGFSKGTFAVAHALAESDNLSIVGGGDSASAAEKAGVVDKLSHVSTGGGASLEFLEGKTLPGVAALDEA.

Residues 24 to 26 (DFN), Arg-40, 63 to 66 (HLGR), Arg-121, and Arg-154 contribute to the substrate site. ATP is bound by residues Lys-205, Glu-337, and 363–366 (GGDS).

Belongs to the phosphoglycerate kinase family. Monomer.

It localises to the cytoplasm. It catalyses the reaction (2R)-3-phosphoglycerate + ATP = (2R)-3-phospho-glyceroyl phosphate + ADP. The protein operates within carbohydrate degradation; glycolysis; pyruvate from D-glyceraldehyde 3-phosphate: step 2/5. This Gloeobacter violaceus (strain ATCC 29082 / PCC 7421) protein is Phosphoglycerate kinase.